Consider the following 354-residue polypeptide: Chorismate synthase (354 aa).

R48 contacts NADP(+). Residues 125–127 (RAS), A280, 295–299 (KPIPS), and R321 contribute to the FMN site.

Belongs to the chorismate synthase family. As to quaternary structure, homotetramer. It depends on FMNH2 as a cofactor.

It carries out the reaction 5-O-(1-carboxyvinyl)-3-phosphoshikimate = chorismate + phosphate. The protein operates within metabolic intermediate biosynthesis; chorismate biosynthesis; chorismate from D-erythrose 4-phosphate and phosphoenolpyruvate: step 7/7. Functionally, catalyzes the anti-1,4-elimination of the C-3 phosphate and the C-6 proR hydrogen from 5-enolpyruvylshikimate-3-phosphate (EPSP) to yield chorismate, which is the branch point compound that serves as the starting substrate for the three terminal pathways of aromatic amino acid biosynthesis. This reaction introduces a second double bond into the aromatic ring system. The protein is Chorismate synthase of Syntrophus aciditrophicus (strain SB).